Consider the following 543-residue polypeptide: MAKRIIYNENARRALERGIDILAEAVAVTLGPKGRNVVLEKKYGAPQIVNDGVTIAKEIELEDHIENTGVALIRQAASKTNDVAGDGTTTATVLAHAIVKEGLRNVAAGANAILLKRGIDKATNFLVDRIREHARSVEDSKAIAQVGAISAGNDDEVRQMIAEALDKVGKEAVISLEEGKSVTTELEVTEGMRFDKGYISPYFATDPERMEAIFDEPFLAVDDKQIALVQDLVPVLEPVARAGRPLVIIAEDIEKEALATLVVNRLRGVLNVAAVKAPGFGDRRKAMLEDIAILTGGQLITEDAGLKLDNTKLDSLGKARRITITKDSTTIVAEGNDVAVKARVEQIRRQMEETESSYDKGKLQERLAKLSGGVAVVKVGAATETEMKDKKLRLEDAINATKAAVEEGIVPGGGTTLAHLTPELEAWANSTLKDEELTGALIVARALPAPLKRIAENAGQNGAVIAERVKEKEFNVDFNAATNEFVDMFSAGIVDPAKVTRSALQNALSYACMVLTTGTVVDKPEPKDAAPAGVGGGGGDFDY.

ATP is bound by residues 29–32 (TLGP), 86–90 (DGTTT), Gly-413, 479–481 (NAA), and Asp-495. A disordered region spans residues 524 to 543 (PEPKDAAPAGVGGGGGDFDY). Over residues 533 to 543 (GVGGGGGDFDY) the composition is skewed to gly residues.

This sequence belongs to the chaperonin (HSP60) family. In terms of assembly, forms a cylinder of 14 subunits composed of two heptameric rings stacked back-to-back. Interacts with the co-chaperonin GroES.

The protein resides in the cytoplasm. The enzyme catalyses ATP + H2O + a folded polypeptide = ADP + phosphate + an unfolded polypeptide.. In terms of biological role, together with its co-chaperonin GroES, plays an essential role in assisting protein folding. The GroEL-GroES system forms a nano-cage that allows encapsulation of the non-native substrate proteins and provides a physical environment optimized to promote and accelerate protein folding. This is Chaperonin GroEL 1 from Anabaena sp. (strain L31).